Consider the following 421-residue polypeptide: Serine--tRNA ligase (421 aa).

227-229 is a binding site for L-serine; sequence TSE. Residues 257 to 259 and Val273 contribute to the ATP site; that span reads RRE. Position 280 (Glu280) interacts with L-serine. 344–347 serves as a coordination point for ATP; it reads ELTS. Residue Thr379 coordinates L-serine.

The protein belongs to the class-II aminoacyl-tRNA synthetase family. Type-1 seryl-tRNA synthetase subfamily. In terms of assembly, homodimer. The tRNA molecule binds across the dimer.

It is found in the cytoplasm. It catalyses the reaction tRNA(Ser) + L-serine + ATP = L-seryl-tRNA(Ser) + AMP + diphosphate + H(+). It carries out the reaction tRNA(Sec) + L-serine + ATP = L-seryl-tRNA(Sec) + AMP + diphosphate + H(+). The protein operates within aminoacyl-tRNA biosynthesis; selenocysteinyl-tRNA(Sec) biosynthesis; L-seryl-tRNA(Sec) from L-serine and tRNA(Sec): step 1/1. Catalyzes the attachment of serine to tRNA(Ser). Is also able to aminoacylate tRNA(Sec) with serine, to form the misacylated tRNA L-seryl-tRNA(Sec), which will be further converted into selenocysteinyl-tRNA(Sec). In Leifsonia xyli subsp. xyli (strain CTCB07), this protein is Serine--tRNA ligase.